Here is a 449-residue protein sequence, read N- to C-terminus: uncharacterized protein (449 aa).

The signal sequence occupies residues 1 to 20 (MWTALVLIWIFSLSLSESHA). The Extracellular portion of the chain corresponds to 21-400 (ASNDPRNFVP…PLTQAVVDKT (380 aa)). Residue N49 is glycosylated (N-linked (GlcNAc...) asparagine). Disordered stretches follow at residues 72-101 (AHLNSMEVTTEDTSRTDVSEPATSGGAADG), 154-187 (MTAASSTPMTLALPAPTSTSTGRTPSTTATGHPS), and 215-381 (QTVA…PSTQ). Low complexity-rich tracts occupy residues 154-184 (MTAASSTPMTLALPAPTSTSTGRTPSTTATG) and 215-234 (QTVATTANTSSPMSTRPSPS). Polar residues-rich tracts occupy residues 255 to 279 (GPISQVSVDQPVVNTTNKSTPMPSN) and 352 to 367 (TPGTDSTGPTPRSSGG). The helical transmembrane segment at 401–421 (LLLVVLLLGVTLFITVLVLFA) threads the bilayer. Topologically, residues 422–449 (LQAYESYKKKDYTQVDYLINGMYADSEM) are cytoplasmic.

Highest expression in heart, placenta, liver, pancreas and colon. Also detected in brain, lung, skeletal muscle, kidney, spleen, prostate, testis, ovary and small intestine. Lowest expression in thymus and leukocytes.

Its subcellular location is the cell membrane. It is found in the golgi apparatus. It localises to the trans-Golgi network membrane. This is an uncharacterized protein from Homo sapiens (Human).